A 256-amino-acid polypeptide reads, in one-letter code: Glucanase inhibitor protein 2 (256 aa).

The signal sequence occupies residues 1–15 (MKLISTIAAATTAFG). Residues 27-254 (IFGGGIIPSG…ATEWINSVTK (228 aa)) enclose the Peptidase S1 domain. Cys-54 and Cys-70 are joined by a disulfide. N-linked (GlcNAc...) asparagine glycans are attached at residues Asn-87, Asn-102, Asn-107, and Asn-157. Intrachain disulfides connect Cys-177–Cys-189 and Cys-199–Cys-230.

It belongs to the peptidase S1 family. In terms of assembly, forms an apoplastic complex with host endoglucanases in tomato leaves during P.infestans infection.

The protein resides in the secreted. Its function is as follows. Secreted effector that suppresses host plant glucan elicitor-mediated defense responses. Targets host endoglucanases and inhibits the endoglucanase-mediated release of elicitor-active glucan oligosaccharides from P.infestans cell walls. The protein is Glucanase inhibitor protein 2 of Phytophthora infestans (Potato late blight agent).